The sequence spans 296 residues: uncharacterized protein (296 aa).

The stretch at 129–170 (VKELKDLIRTVADEHMKMKREHEAAMKELTLLINNQKQQQQQ) forms a coiled coil. Positions 165 to 187 (KQQQQQPVPMPRNSTATRPKNLA) are disordered.

This is an uncharacterized protein from Ostreid herpesvirus 1 (isolate France) (OsHV-1).